Consider the following 601-residue polypeptide: MHPLQCVLQVQRSLGWGPLASVSWLSLRMCRAHSSLSSTMCPSPERQEDGARKDFSSRLAAGPTFQHFLKSASAPQEKLSSEVEDPPPYLMMDELLGRQRKVYLETYGCQMNVNDTEIAWSILQKSGYLRTSNLQEADVILLVTCSIREKAEQTIWNRLHQLKALKTRRPRSRVPLRIGILGCMAERLKEEILNREKMVDILAGPDAYRDLPRLLAVAESGQQAANVLLSLDETYADVMPVQTSASATSAFVSIMRGCDNMCSYCIVPFTRGRERSRPIASILEEVKKLSEQVFLPPRPPKVLGLQGLKEVTLLGQNVNSFRDNSEVQFNSAVPTNLSRGFTTNYKTKQGGLRFAHLLDQVSRVDPEMRIRFTSPHPKDFPDEVLQLIHERDNICKQIHLPAQSGSSRVLEAMRRGYSREAYVELVHHIRESIPGVSLSSDFIAGFCGETEEDHVQTVSLLREVQYNMGFLFAYSMRQKTRAYHRLKDDVPEEVKLRRLEELITIFREEATKANQTSVGCTQLVLVEGLSKRSATDLCGRNDGNLKVIFPDAEMEDVNNPGLRVRAQPGDYVLVKITSASSQTLRGHVLCRTTLRDSSAYC.

The transit peptide at 1–33 (MHPLQCVLQVQRSLGWGPLASVSWLSLRMCRAH) directs the protein to the mitochondrion. Positions 100-220 (RKVYLETYGC…LPRLLAVAES (121 aa)) constitute an MTTase N-terminal domain. 6 residues coordinate [4Fe-4S] cluster: Cys109, Cys145, Cys183, Cys258, Cys262, and Cys265. The Radical SAM core domain maps to 244–512 (SASATSAFVS…ITIFREEATK (269 aa)). The region spanning 515–590 (QTSVGCTQLV…SQTLRGHVLC (76 aa)) is the TRAM domain.

Belongs to the methylthiotransferase family. MiaB subfamily. Interacts with CDK5R1 (p35 form). CDK5RAP1, CDK5RAP2 and CDK5RAP3 show competitive binding to CDK5R1. Forms a complex with CDK5R1 and CDK5. Requires [4Fe-4S] cluster as cofactor. As to expression, expressed in heart, brain, placenta, lung, liver, skeletal muscle, kidney and pancreas. Expressed in neurons of central nervous tissue. Mainly expressed in brain, placenta and testis. In terms of tissue distribution, high expression in placenta and lung.

The protein localises to the mitochondrion. It catalyses the reaction N(6)-dimethylallyladenosine(37) in tRNA + (sulfur carrier)-SH + AH2 + 2 S-adenosyl-L-methionine = 2-methylsulfanyl-N(6)-dimethylallyladenosine(37) in tRNA + (sulfur carrier)-H + 5'-deoxyadenosine + L-methionine + A + S-adenosyl-L-homocysteine + 2 H(+). Functionally, methylthiotransferase that catalyzes the conversion of N6-(dimethylallyl)adenosine (i(6)A) to 2-methylthio-N6-(dimethylallyl)adenosine (ms(2)i(6)A) at position 37 (adjacent to the 3'-end of the anticodon) of four mitochondrial DNA-encoded tRNAs (Ser(UCN), Phe, Tyr and Trp). Essential for efficient and highly accurate protein translation by the ribosome. Specifically inhibits CDK5 activation by CDK5R1. Essential for efficient mitochondrial protein synthesis and respiratory chain; shows pathological consequences in mitochondrial disease. In Homo sapiens (Human), this protein is Mitochondrial tRNA methylthiotransferase CDK5RAP1.